The primary structure comprises 153 residues: CRIB domain-containing protein RIC4 (153 aa).

The CRIB domain occupies 99 to 112 (IGVPTNVKHVSHIG).

In terms of assembly, interacts with ARAC4/ROP2 and ARAC11/ROP1. Expressed in roots, leaves, stems, flowers, siliques and pollen.

The protein resides in the cell membrane. In terms of biological role, functions as a downstream effector of Rho-related GTP binding proteins of the 'Rho of Plants' (ROPs) family. Participates in the propagation of ROP GTPase signals in specific cellular responses. Required for actin cortical microfilament assembly. Activated by ARAC4/ROP2 to promote the assembly of cortical actin microfilaments required for lobe formation and lateral expansion of pavement cells. Interaction with, and activation by ARAC4/ROP2 is inhibited by RIC1. Functions as a downstream effector of ARAC11/ROP1 to promote the assembly of apical F-actin associated with vesicle accumulation in the tip of the growing pollen tube. Counteracts the ARAC11/ROP1-RIC3 pathway, which activates calcium signaling that leads to apical F-actin disassembly associated with exocytosis, to control actin dynamics and pollen tube apical growth. Downstream of ARAC11/ROP1, is involved in the growth responses to the root-colonizing endophytic fungus P.indica. This chain is CRIB domain-containing protein RIC4 (RIC4), found in Arabidopsis thaliana (Mouse-ear cress).